The primary structure comprises 512 residues: Lysine--tRNA ligase (512 aa).

Residues E408 and E415 each contribute to the Mg(2+) site.

The protein belongs to the class-II aminoacyl-tRNA synthetase family. As to quaternary structure, homodimer. Mg(2+) is required as a cofactor.

The protein localises to the cytoplasm. It carries out the reaction tRNA(Lys) + L-lysine + ATP = L-lysyl-tRNA(Lys) + AMP + diphosphate. The protein is Lysine--tRNA ligase of Prochlorococcus marinus (strain MIT 9515).